The primary structure comprises 162 residues: Protein cornichon homolog 2 (162 aa).

Residues 1 to 10 lie on the Cytoplasmic side of the membrane; sequence MAFTFAAFCY. A helical membrane pass occupies residues 11–31; that stretch reads MLTLVLCASLIFFIIWHIIAF. The Lumenal segment spans residues 32 to 72; that stretch reads DDLRTDFKDPIEQGNPSRARERIKNVERVCCLLRKLVVPEY. The chain crosses the membrane as a helical span at residues 73–93; it reads CIHGLFCLMFMCAAEWVTLGL. Topologically, residues 94 to 138 are cytoplasmic; that stretch reads NIPLLFYHLWRYFHRPADGSEVMFDPVSIMNVDILNYCQKEAWCK. The chain crosses the membrane as a helical span at residues 139–161; that stretch reads LAFYLLSFFYYLYRVGATVRYVS. Residue alanine 162 is a topological domain, lumenal.

Belongs to the cornichon family.

It localises to the membrane. In terms of biological role, regulates the trafficking and gating properties of AMPA-selective glutamate receptors (AMPARs). In Xenopus laevis (African clawed frog), this protein is Protein cornichon homolog 2 (cnih2).